Reading from the N-terminus, the 397-residue chain is Nickel-cobalt-cadmium resistance protein NccB (397 aa).

The helical transmembrane segment at 10–30 (PSWPMIAGVAAAAALVGFGAA) threads the bilayer. A coiled-coil region spans residues 137-195 (EAAAMAAERKVAQARADLARKTYERESSLFQQGVTPRQEMESARIALDVAQAEVQRAAT).

The protein belongs to the membrane fusion protein (MFP) (TC 8.A.1) family.

It is found in the cell inner membrane. Its function is as follows. Component of the NCC cation efflux system that confers resistance to nickel, cobalt and cadmium. The sequence is that of Nickel-cobalt-cadmium resistance protein NccB (nccB) from Alcaligenes xylosoxydans xylosoxydans (Achromobacter xylosoxidans).